Here is a 467-residue protein sequence, read N- to C-terminus: MDYFEGGERLNLMQVLDNREWREKYQKQLMASFPTAVITSVKLNLPGPIKTSPKLQSVFQIIINDLNPVFKDLQIIKEASFVDQITGPDIFFVTSGCLKLVKQIMITFEESHLLGRLLDLDVMCQNADKQLSREELGFAPRKCLLCGKDAKTCIKEGNHSLAEGYSQINKMLHNFEKSKMIVPQMTQSQVVNAALTGMLYEVSLAPKPGLVDPSSNGAHKDMTVFTFIDSSLALQPYLNEAYRIGNQFKGTDLPRMFSLLRNAGIRAEKDMFAATNGVNTHKGAVFSLGIMVTAVAYATQKGITNLLTIQKVISDMTQDLVKNDLGKNNLRHSQNQQTAGERQFIKYKIPGVRGEAEKGFPIVMNLALPFLCEQQGNLNQRLLNTLMKIAGNIDDTNLIKRAGNATISKDMQHWSVTFFQIGGSYTPEGLKFLNDLDQMFIKRNLSMGGAADNLILTIFLARLVGSL.

The segment at 1–178 is apo-citrate lyase phosphoribosyl-dephospho-CoA transferase; the sequence is MDYFEGGERL…NKMLHNFEKS (178 aa). A 2-(5''-triphosphoribosyl)-3'-dephosphocoenzyme-A synthase region spans residues 179 to 467; it reads KMIVPQMTQS…IFLARLVGSL (289 aa).

In the N-terminal section; belongs to the CitX family. It in the C-terminal section; belongs to the CitG/MdcB family.

The catalysed reaction is apo-[citrate lyase ACP] + 2'-(5''-triphospho-alpha-D-ribosyl)-3'-dephospho-CoA = holo-[citrate lyase ACP] + diphosphate. The enzyme catalyses 3'-dephospho-CoA + ATP = 2'-(5''-triphospho-alpha-D-ribosyl)-3'-dephospho-CoA + adenine. Bifunctional enzyme that catalyzes formation of 2-(5''-triphosphoribosyl)-3'-dephosphocoenzyme-A, and then the transfer of this prosthetic group precursor to the apo-acyl carrier protein (gamma chain) of the citrate lyase to yield the holo-acyl carrier protein. The chain is Protein CitXG (citXG) from Leuconostoc mesenteroides subsp. cremoris.